The following is a 178-amino-acid chain: Probable inosine/xanthosine triphosphatase (178 aa).

It belongs to the YjjX NTPase family. In terms of assembly, homodimer. Requires Mg(2+) as cofactor. It depends on Mn(2+) as a cofactor.

It carries out the reaction XTP + H2O = XDP + phosphate + H(+). It catalyses the reaction ITP + H2O = IDP + phosphate + H(+). Phosphatase that hydrolyzes non-canonical purine nucleotides such as XTP and ITP to their respective diphosphate derivatives. Probably excludes non-canonical purines from DNA/RNA precursor pool, thus preventing their incorporation into DNA/RNA and avoiding chromosomal lesions. In Pyrobaculum aerophilum (strain ATCC 51768 / DSM 7523 / JCM 9630 / CIP 104966 / NBRC 100827 / IM2), this protein is Probable inosine/xanthosine triphosphatase.